A 422-amino-acid chain; its full sequence is Interleukin-11 receptor subunit alpha (422 aa).

Positions 1 to 22 (MSSSCSGLSRVLVAVATALVSA) are cleaved as a signal peptide. The Extracellular portion of the chain corresponds to 24–370 (SPCPQAWGPP…DSVEQVAVLA (347 aa)). One can recognise an Ig-like C2-type domain in the interval 27 to 110 (PQAWGPPGVQ…LGGTVTLQLG (84 aa)). Cystine bridges form between cysteine 48-cysteine 94, cysteine 120-cysteine 130, and cysteine 170-cysteine 180. 2 Fibronectin type-III domains span residues 112–219 (PPAR…LRPD) and 220–317 (PPQG…TPST). A glycan (N-linked (GlcNAc...) asparagine) is linked at asparagine 127. Asparagine 194 carries N-linked (GlcNAc...) asparagine glycosylation. Positions 304 to 308 (WSTWS) match the WSXWS motif motif. The tract at residues 335–355 (EVEPQVDSPAPPRPSLQPHPR) is disordered. A helical transmembrane segment spans residues 371-391 (SLGILSFLGLVAGALALGLWL). Topologically, residues 392–422 (RLRRGGKDGSPKPGFLASVIPVDRRPGAPNL) are cytoplasmic. Positions 398 to 422 (KDGSPKPGFLASVIPVDRRPGAPNL) are disordered. Residues 413–422 (VDRRPGAPNL) show a composition bias toward basic and acidic residues.

It belongs to the type I cytokine receptor family. Type 3 subfamily. As to quaternary structure, on IL11 binding, forms a multimer complex with IL6ST/gp130. A short soluble form is also released from the membrane by proteolysis. The sIL11RA is formed either by limited proteolysis of membrane-bound receptors, a process referred to as ectodomain shedding, or directly secreted from the cells after alternative mRNA splicing. mIL11RA is cleaved by the proteases ADAM10, ELANE and PRTN3. Expressed in a number of cell lines, including the myelogenous leukemia cell line K-562, the megakaryocytic leukemia cell line M-07e, the erythroleukemia cell line TF-1, and the osteosarcoma cell lines, MG-63 and SaOS-2. Also expressed in normal and malignant prostate epithelial cell lines. Expression levels are increased in prostate carcinoma.

It is found in the membrane. Its subcellular location is the secreted. Functionally, receptor for interleukin-11 (IL11). The receptor systems for IL6, LIF, OSM, CNTF, IL11 and CT1 can utilize IL6ST for initiating signal transmission. The IL11/IL11RA/IL6ST complex may be involved in the control of proliferation and/or differentiation of skeletogenic progenitor or other mesenchymal cells. Essential for the normal development of craniofacial bones and teeth. Restricts suture fusion and tooth number. Its function is as follows. Soluble form of IL11 receptor (sIL11RA) that acts as an agonist of IL11 activity. The IL11:sIL11RA complex binds to IL6ST/gp130 on cell surfaces and induces signaling also on cells that do not express membrane-bound IL11RA in a process called IL11 trans-signaling. In Homo sapiens (Human), this protein is Interleukin-11 receptor subunit alpha.